The sequence spans 205 residues: UPF0316 protein Cthe_2213 (205 aa).

Helical transmembrane passes span 15-37 (LPLLIFFSRIIDVTIGTIRIIFV), 44-64 (LAPVLGFFEVLVWIMAISQIM), and 70-90 (FVCYFAYAAGFATGTFVGIII).

This sequence belongs to the UPF0316 family.

The protein localises to the cell membrane. The sequence is that of UPF0316 protein Cthe_2213 from Acetivibrio thermocellus (strain ATCC 27405 / DSM 1237 / JCM 9322 / NBRC 103400 / NCIMB 10682 / NRRL B-4536 / VPI 7372) (Clostridium thermocellum).